The primary structure comprises 315 residues: Transaldolase (315 aa).

Residue lysine 125 is the Schiff-base intermediate with substrate of the active site.

It belongs to the transaldolase family. Type 1 subfamily. Homodimer.

It is found in the cytoplasm. The catalysed reaction is D-sedoheptulose 7-phosphate + D-glyceraldehyde 3-phosphate = D-erythrose 4-phosphate + beta-D-fructose 6-phosphate. It functions in the pathway carbohydrate degradation; pentose phosphate pathway; D-glyceraldehyde 3-phosphate and beta-D-fructose 6-phosphate from D-ribose 5-phosphate and D-xylulose 5-phosphate (non-oxidative stage): step 2/3. Its function is as follows. Transaldolase is important for the balance of metabolites in the pentose-phosphate pathway. In Paracidovorax citrulli (strain AAC00-1) (Acidovorax citrulli), this protein is Transaldolase.